The primary structure comprises 777 residues: Zinc finger FYVE domain-containing protein 1 (777 aa).

The interval 416–777 is required for localization in the lipid droplets; it reads MAHSSFFPDE…FNCNKKPGDL (362 aa). 2 consecutive FYVE-type zinc fingers follow at residues 598–659 and 715–775; these read NSQI…EARN and DHEI…KKPG. 16 residues coordinate Zn(2+): cysteine 604, cysteine 607, cysteine 620, cysteine 623, cysteine 628, cysteine 631, cysteine 651, cysteine 654, cysteine 721, cysteine 724, cysteine 737, cysteine 740, cysteine 745, cysteine 748, cysteine 767, and cysteine 770.

Interacts with RAB18 (in GTP-bound form). Interacts with BSCL2 in a RAB18-dependent manner. Interacts with ZW10. In terms of assembly, (Microbial infection) Interacts with SARS coronavirus-2/SARS-CoV-2 non-structural protein 6 (nsp6); the interaction is independent of PtdIns3P-binding and leads to endoplasmic reticulum (ER) and double membrane vesicles (DMVs) binding to lipid droplets. As to expression, highly expressed in heart. Also detected in the testis. Expressed in all tissues examined, including, brain, placenta, lung, liver, skeletal muscle, pancreas and kidney. Highly expressed in heart.

The protein resides in the golgi apparatus. Its subcellular location is the golgi stack. It is found in the endoplasmic reticulum. It localises to the lipid droplet. The protein localises to the preautophagosomal structure. The protein resides in the mitochondrion. Its function is as follows. Plays a role in the formation of lipid droplets (LDs) which are storage organelles at the center of lipid and energy homeostasis. Regulates the morphology, size and distribution of LDs. Mediates the formation of endoplasmic reticulum-lipid droplets (ER-LD) contacts by forming a complex with RAB18 and ZW10. Binds to phosphatidylinositol 3-phosphate (PtdIns3P) through FYVE-type zinc finger. Functionally, (Microbial infection) Upon SARS coronavirus-2/SARS-CoV-2 infection, mediates through binding with non-structural protein 6 (nsp6) the replication organelle-lipid droplet association required to sustain viral replication. The polypeptide is Zinc finger FYVE domain-containing protein 1 (ZFYVE1) (Homo sapiens (Human)).